Consider the following 370-residue polypeptide: Dual-specificity RNA methyltransferase RlmN (370 aa).

Residue glutamate 93 is the Proton acceptor of the active site. The region spanning 99 to 337 (EEGRGTLCVS…VTTVRKTRGD (239 aa)) is the Radical SAM core domain. The cysteines at positions 106 and 343 are disulfide-linked. 3 residues coordinate [4Fe-4S] cluster: cysteine 113, cysteine 117, and cysteine 120. Residues 167 to 168 (GE), serine 199, 221 to 223 (SLH), and asparagine 300 contribute to the S-adenosyl-L-methionine site. Cysteine 343 functions as the S-methylcysteine intermediate in the catalytic mechanism.

This sequence belongs to the radical SAM superfamily. RlmN family. Requires [4Fe-4S] cluster as cofactor.

The protein resides in the cytoplasm. It carries out the reaction adenosine(2503) in 23S rRNA + 2 reduced [2Fe-2S]-[ferredoxin] + 2 S-adenosyl-L-methionine = 2-methyladenosine(2503) in 23S rRNA + 5'-deoxyadenosine + L-methionine + 2 oxidized [2Fe-2S]-[ferredoxin] + S-adenosyl-L-homocysteine. The enzyme catalyses adenosine(37) in tRNA + 2 reduced [2Fe-2S]-[ferredoxin] + 2 S-adenosyl-L-methionine = 2-methyladenosine(37) in tRNA + 5'-deoxyadenosine + L-methionine + 2 oxidized [2Fe-2S]-[ferredoxin] + S-adenosyl-L-homocysteine. In terms of biological role, specifically methylates position 2 of adenine 2503 in 23S rRNA and position 2 of adenine 37 in tRNAs. m2A2503 modification seems to play a crucial role in the proofreading step occurring at the peptidyl transferase center and thus would serve to optimize ribosomal fidelity. In Francisella tularensis subsp. novicida (strain U112), this protein is Dual-specificity RNA methyltransferase RlmN.